The following is a 651-amino-acid chain: E3 SUMO-protein ligase PIAS1 (651 aa).

Ala2 is subject to N-acetylalanine. Residues 2-200 (ADSAELKQMV…KCDFTVQVQL (199 aa)) are required for interaction with MSX1. The SAP domain occupies 11–45 (VMSLRVSELQVLLGYAGRNKHGRKHELLTKALHLL). The LXXLL motif signature appears at 19-23 (LQVLL). Glycyl lysine isopeptide (Lys-Gly) (interchain with G-Cter in SUMO2) cross-links involve residues Lys40 and Lys46. Positions 56–64 (KIKELYRRR) match the Nuclear localization signal motif. Residues 124–288 (HLTSALHPVH…SMAVYLVKQL (165 aa)) enclose the PINIT domain. Residues Lys137 and Lys238 each participate in a glycyl lysine isopeptide (Lys-Gly) (interchain with G-Cter in SUMO2) cross-link. Residues 320–405 (PDSEIATTSL…LKYCTDCDEI (86 aa)) form an SP-RING-type zinc finger. Residues Cys351, His353, Cys374, and Cys377 each coordinate Zn(2+). Residues 368–380 (KKPTWVCPVCDKK) carry the Nuclear localization signal motif. Residue Lys453 forms a Glycyl lysine isopeptide (Lys-Gly) (interchain with G-Cter in SUMO2) linkage. Residues 462–473 (LTIDSSSDEEEE) are SUMO1-binding. A disordered region spans residues 465–511 (DSSSDEEEEEPPAKRTCPSLSPTSPLSNKGILSLPHQASPVSRTPSL). Ser467, Ser468, Ser483, and Ser485 each carry phosphoserine. Over residues 482 to 491 (PSLSPTSPLS) the composition is skewed to low complexity. A Phosphothreonine modification is found at Thr487. A phosphoserine mark is found at Ser488 and Ser491. Lys493 participates in a covalent cross-link: Glycyl lysine isopeptide (Lys-Gly) (interchain with G-Cter in SUMO2). 3 positions are modified to phosphoserine: Ser503, Ser510, and Ser522. Repeat copies occupy residues 520–523 (NTSL) and 557–560 (NTSL). The segment at 520-615 (NTSLIQDYRH…GSSSGSNSSL (96 aa)) is 4 X 4 AA repeats of N-T-S-L. Residues 598-601 (STSL) form a 3; approximate repeat. The interval 600 to 630 (SLPATNGSSSGSNSSLVSSNSLRESHGHGVA) is disordered. Over residues 605 to 621 (NGSSSGSNSSLVSSNSL) the composition is skewed to low complexity. The stretch at 612–615 (NSSL) is one 4; approximate repeat.

It belongs to the PIAS family. Interacts with NR2C1; the interaction promotes its sumoylation. Interacts with DDX21, CSRP2, AXIN1, JUN, SATB2, PLAG1, TP53 and STAT1 (dimer), following IFNA1-stimulation. Interacts with SP3 (preferentially when SUMO-modified). Interacts with KLF8; the interaction results in SUMO ligation and repression of KLF8 transcriptional activity and of its cell cycle progression into G(1) phase. Interacts with CHUK/IKKA; this interaction induces PIAS1 phosphorylation. Interacts with PTK2/FAK1; the interaction promotes its sumoylation. Interacts with SUMO1, UBE2I, NCOA2 and AR. Interacts with NR2C1; the interaction promotes its sumoylation. Interacts with DDX5. Interacts with MTA1. Interacts with PML (isoform PML-12). Interacts with PRDM1. Interacts (via N-terminus) with MSX1 (via C-terminus); the interaction is required for the localization of both proteins to the nuclear periphery and specific binding of MSX1 to the core enhancer region in target gene promoters. Post-translationally, sumoylated. As to expression, expressed in kidney, heart, spleen, brain and cerebellum; weak expression, if any, in liver and lung.

It localises to the nucleus. The protein localises to the nucleus speckle. Its subcellular location is the PML body. It is found in the cytoplasm. The protein resides in the cytoskeleton. It catalyses the reaction S-ubiquitinyl-[E2 ubiquitin-conjugating enzyme]-L-cysteine + [acceptor protein]-L-lysine = [E2 ubiquitin-conjugating enzyme]-L-cysteine + N(6)-ubiquitinyl-[acceptor protein]-L-lysine.. It functions in the pathway protein modification; protein sumoylation. Its function is as follows. Functions as an E3-type small ubiquitin-like modifier (SUMO) ligase, stabilizing the interaction between UBE2I and the substrate, and as a SUMO-tethering factor. Catalyzes sumoylation of various proteins, such as CEBPB, MRE11, MTA1, PTK2 and PML. Plays a crucial role as a transcriptional coregulation in various cellular pathways, including the STAT pathway, the p53 pathway and the steroid hormone signaling pathway. In vitro, binds A/T-rich DNA. The effects of this transcriptional coregulation, transactivation or silencing, may vary depending upon the biological context. Mediates sumoylation of MRE11, stabilizing MRE11 on chromatin during end resection. Sumoylates PML (at 'Lys-65' and 'Lys-160') and PML-RAR and promotes their ubiquitin-mediated degradation. PIAS1-mediated sumoylation of PML promotes its interaction with CSNK2A1/CK2 which in turn promotes PML phosphorylation and degradation. Enhances the sumoylation of MTA1 and may participate in its paralog-selective sumoylation. Plays a dynamic role in adipogenesis by promoting the SUMOylation and degradation of CEBPB. Mediates the nuclear mobility and localization of MSX1 to the nuclear periphery, whereby MSX1 is brought into the proximity of target myoblast differentiation factor genes. Also required for the binding of MSX1 to the core enhancer region in target gene promoter regions, independent of its sumoylation activity. Capable of binding to the core enhancer region TAAT box in the MYOD1 gene promoter. In Mus musculus (Mouse), this protein is E3 SUMO-protein ligase PIAS1 (Pias1).